The following is a 168-amino-acid chain: Protein SprT (168 aa).

In terms of domain architecture, SprT-like spans 20–166 (EKLQQANKYL…RHCQAILQLI (147 aa)). Residue His78 coordinates Zn(2+). Glu79 is a catalytic residue. Position 82 (His82) interacts with Zn(2+).

Belongs to the SprT family. It depends on Zn(2+) as a cofactor.

The protein resides in the cytoplasm. This chain is Protein SprT, found in Proteus mirabilis (strain HI4320).